The following is a 127-amino-acid chain: uncharacterized protein (127 aa).

A signal peptide spans 1–16; that stretch reads MIKKIIFGIAILLSTS. Cys-17 is lipidated: N-palmitoyl cysteine. Cys-17 carries S-diacylglycerol cysteine lipidation. Residues 56 to 101 adopt a coiled-coil conformation; it reads EVREEIQKYRVAIVKINKKKRELYNRLSKEAQNFLAEQQKYKQKLS. Polar residues predominate over residues 107 to 118; it reads VENDQKNNTADS. A disordered region spans residues 107 to 127; that stretch reads VENDQKNNTADSNDNKSKDTK.

It localises to the cell membrane. This is an uncharacterized protein from Rickettsia conorii (strain ATCC VR-613 / Malish 7).